Reading from the N-terminus, the 334-residue chain is Phosphate acyltransferase (334 aa).

This sequence belongs to the PlsX family. Homodimer. Probably interacts with PlsY.

The protein localises to the cytoplasm. It carries out the reaction a fatty acyl-[ACP] + phosphate = an acyl phosphate + holo-[ACP]. The protein operates within lipid metabolism; phospholipid metabolism. Functionally, catalyzes the reversible formation of acyl-phosphate (acyl-PO(4)) from acyl-[acyl-carrier-protein] (acyl-ACP). This enzyme utilizes acyl-ACP as fatty acyl donor, but not acyl-CoA. This chain is Phosphate acyltransferase, found in Fervidobacterium nodosum (strain ATCC 35602 / DSM 5306 / Rt17-B1).